The sequence spans 83 residues: Large ribosomal subunit protein uL24 (83 aa).

The protein belongs to the universal ribosomal protein uL24 family. In terms of assembly, part of the 50S ribosomal subunit.

Functionally, one of two assembly initiator proteins, it binds directly to the 5'-end of the 23S rRNA, where it nucleates assembly of the 50S subunit. Its function is as follows. One of the proteins that surrounds the polypeptide exit tunnel on the outside of the subunit. The protein is Large ribosomal subunit protein uL24 of Symbiobacterium thermophilum (strain DSM 24528 / JCM 14929 / IAM 14863 / T).